Reading from the N-terminus, the 562-residue chain is tRNA (guanine(37)-N(1))-methyltransferase (562 aa).

The N-terminal 41 residues, 1-41, are a transit peptide targeting the mitochondrion; it reads MLFRRFLNLTTKTPHLQTFRARHYFRNMSCPELIPPPTVRG. S-adenosyl-L-methionine contacts are provided by residues H243, 281 to 282, and N340; that span reads DL. Residues 523 to 534 show a composition bias toward basic and acidic residues; sequence AHIVAKKPEKKP. Residues 523-562 are disordered; that stretch reads AHIVAKKPEKKPLPAKPASKKNKNQANTKQVEAGLDKMQM.

Belongs to the class I-like SAM-binding methyltransferase superfamily. TRM5/TYW2 family. Monomer.

Its subcellular location is the mitochondrion matrix. It localises to the nucleus. The protein resides in the cytoplasm. It carries out the reaction guanosine(37) in tRNA + S-adenosyl-L-methionine = N(1)-methylguanosine(37) in tRNA + S-adenosyl-L-homocysteine + H(+). Its function is as follows. Specifically methylates the N1 position of guanosine-37 in various cytoplasmic and mitochondrial tRNAs. Methylation is not dependent on the nature of the nucleoside 5' of the target nucleoside. This is the first step in the biosynthesis of wybutosine (yW), a modified base adjacent to the anticodon of tRNAs and required for accurate decoding. The sequence is that of tRNA (guanine(37)-N(1))-methyltransferase from Aedes aegypti (Yellowfever mosquito).